The chain runs to 87 residues: Stannin (87 aa).

Over M1–T10 the chain is Mitochondrial intermembrane. The chain crosses the membrane as a helical span at residues G11–G31. Topologically, residues C32–S87 are cytoplasmic. The residue at position 49 (S49) is a Phosphoserine.

The protein belongs to the stannin family. As to quaternary structure, monomer.

Its subcellular location is the mitochondrion outer membrane. Plays a role in the toxic effects of organotins. Plays a role in endosomal maturation. This is Stannin (SNN) from Bos taurus (Bovine).